The chain runs to 255 residues: Putative keratin-87 protein (255 aa).

The IF rod domain occupies 1–255 (MEANSGRLAS…SRGCVRALVL (255 aa)). Coiled-coil stretches lie at residues 19–81 (LEGY…EIRV) and 147–227 (LRRT…VMNS).

It belongs to the intermediate filament family. In terms of assembly, heterotetramer of two type I and two type II keratins.

The protein is Putative keratin-87 protein (KRT87P) of Homo sapiens (Human).